The following is a 396-amino-acid chain: Subtilisin-like protease 5 (396 aa).

The signal sequence occupies residues 1 to 20 (MTGFFTILSFSLAALSVTNA). Positions 21-116 (AQILSVPKGA…VEPDAIISQH (96 aa)) are excised as a propeptide. In terms of domain architecture, Inhibitor I9 spans 37–113 (YIVVMKDDTS…VAFVEPDAII (77 aa)). In terms of domain architecture, Peptidase S8 spans 125-396 (PWGLSRLSNR…SRLLYNGSGR (272 aa)). Catalysis depends on charge relay system residues aspartate 156 and histidine 187. 2 N-linked (GlcNAc...) asparagine glycosylation sites follow: asparagine 230 and asparagine 248. Serine 342 serves as the catalytic Charge relay system. Residues 376–389 (PTIRNPGPDTTSRL) are compositionally biased toward polar residues. Residues 376–396 (PTIRNPGPDTTSRLLYNGSGR) form a disordered region. N-linked (GlcNAc...) asparagine glycosylation occurs at asparagine 392.

This sequence belongs to the peptidase S8 family.

It is found in the secreted. Secreted subtilisin-like serine protease with keratinolytic activity that contributes to pathogenicity. The protein is Subtilisin-like protease 5 (SUB5) of Arthroderma benhamiae (strain ATCC MYA-4681 / CBS 112371) (Trichophyton mentagrophytes).